Reading from the N-terminus, the 307-residue chain is Acyl transferase (307 aa).

Catalysis depends on charge relay system residues serine 116, aspartate 213, and histidine 243.

Belongs to the LuxD family.

It functions in the pathway lipid metabolism; fatty acid reduction for biolumincescence. Its function is as follows. Acyl transferase is part of the fatty acid reductase system required for aldehyde biosynthesis; it produces fatty acids for the luminescent reaction. The polypeptide is Acyl transferase (Aliivibrio fischeri (strain MJ11) (Vibrio fischeri)).